A 253-amino-acid polypeptide reads, in one-letter code: MSFIVHNRRSSKKQFQVDPLLMPKVPRINYLHIQEEKHRLQLKKFLLHRLFLVGYIQANTEKKEISEYYEQLFQSILKHHLGEVVTGLFLIYPSSFLHILESSNGTLFRILLDYVAHEKSEREFMIQNMKIIVASHNIPTRLFMQWHISIIKVPVLYLDDDTQSQSVEEVTTDFLTLTHKLALHLYKTVKLGGKGPGDNLHQLAPELILPEKTIKYLCKATEFMDPASFLSMYNRPIHITMDSDIVWPAPSRF.

This is Testis-expressed protein 47 from Rattus norvegicus (Rat).